The sequence spans 338 residues: Protein WVD2-like 2 (338 aa).

The segment covering Met-1–Ala-14 has biased composition (basic and acidic residues). The interval Met-1 to Thr-150 is disordered. Polar residues-rich tracts occupy residues Asn-15–Glu-37 and Gln-59–Lys-69. Positions Asn-100 to Ser-115 are enriched in low complexity. Over residues Arg-128 to Glu-138 the composition is skewed to basic and acidic residues. Positions Arg-177–Lys-214 form a coiled coil. Positions Pro-222 to Glu-338 are disordered. Positions Thr-288–Lys-300 are enriched in polar residues.

This sequence belongs to the TPX2 family. In terms of tissue distribution, expressed in seedlings.

It is found in the cytoplasm. It localises to the cytoskeleton. Its function is as follows. Microtubule-associated protein (MAP) that regulates the orientation of interphase cortical microtubules. The chain is Protein WVD2-like 2 from Arabidopsis thaliana (Mouse-ear cress).